Here is a 432-residue protein sequence, read N- to C-terminus: Putative D-alanyl-D-alanine carboxypeptidase (432 aa).

The helical; Signal-anchor transmembrane segment at 7–25 threads the bilayer; that stretch reads ATVLLTFSLSAFAVEYPVL.

The protein belongs to the peptidase S12 family. YfeW subfamily.

The protein localises to the cell inner membrane. It carries out the reaction Preferential cleavage: (Ac)2-L-Lys-D-Ala-|-D-Ala. Also transpeptidation of peptidyl-alanyl moieties that are N-acyl substituents of D-alanine.. The chain is Putative D-alanyl-D-alanine carboxypeptidase from Salmonella typhi.